A 157-amino-acid polypeptide reads, in one-letter code: Protein snakeskin (157 aa).

The Cytoplasmic portion of the chain corresponds to 2-6 (VSVQT). The helical transmembrane segment at 7–27 (IATIVVKTFKIVLNIIILVLY) threads the bilayer. The Extracellular portion of the chain corresponds to 28–53 (RTGYNGEFLGVGGTWNLNEEKNPDAE). The helical transmembrane segment at 54–74 (IVASGVIVGYLIYTLVQIVTF) threads the bilayer. Residues 75-87 (LFGTTEHKRALSE) lie on the Cytoplasmic side of the membrane. Residues 88-108 (IVMNFVGVFLWIAVGAVALHY) form a helical membrane-spanning segment. The Extracellular portion of the chain corresponds to 109-130 (WGGYQGEHQFQFVFAEKQVGLA). Residues 131 to 151 (VGALCVINGAIYLLDTALSVI) traverse the membrane as a helical segment. Residues 152–157 (HFTKEM) are Cytoplasmic-facing.

Expressed in midgut epithelium (at protein level).

The protein localises to the apicolateral cell membrane. The protein resides in the cell junction. It localises to the septate junction. Required for assembly of smooth septate junctions (sSJs). May be important for barrier function of the midgut epithelium. This chain is Protein snakeskin, found in Bombyx mori (Silk moth).